Here is a 354-residue protein sequence, read N- to C-terminus: 3-dehydroquinate synthase (354 aa).

NAD(+) is bound by residues 66–71 (DGERYK), 100–104 (GVVGD), 124–125 (TT), lysine 137, and lysine 146. Residues glutamate 179, histidine 242, and histidine 259 each coordinate Zn(2+).

The protein belongs to the sugar phosphate cyclases superfamily. Dehydroquinate synthase family. Co(2+) serves as cofactor. Requires Zn(2+) as cofactor. It depends on NAD(+) as a cofactor.

The protein resides in the cytoplasm. The catalysed reaction is 7-phospho-2-dehydro-3-deoxy-D-arabino-heptonate = 3-dehydroquinate + phosphate. It participates in metabolic intermediate biosynthesis; chorismate biosynthesis; chorismate from D-erythrose 4-phosphate and phosphoenolpyruvate: step 2/7. Its function is as follows. Catalyzes the conversion of 3-deoxy-D-arabino-heptulosonate 7-phosphate (DAHP) to dehydroquinate (DHQ). The sequence is that of 3-dehydroquinate synthase from Halorhodospira halophila (strain DSM 244 / SL1) (Ectothiorhodospira halophila (strain DSM 244 / SL1)).